The chain runs to 265 residues: Hydroxyethylthiazole kinase (265 aa).

A substrate-binding site is contributed by methionine 43. Lysine 118 and threonine 165 together coordinate ATP. Residue glycine 192 coordinates substrate.

This sequence belongs to the Thz kinase family. The cofactor is Mg(2+).

The enzyme catalyses 5-(2-hydroxyethyl)-4-methylthiazole + ATP = 4-methyl-5-(2-phosphooxyethyl)-thiazole + ADP + H(+). Its pathway is cofactor biosynthesis; thiamine diphosphate biosynthesis; 4-methyl-5-(2-phosphoethyl)-thiazole from 5-(2-hydroxyethyl)-4-methylthiazole: step 1/1. Functionally, catalyzes the phosphorylation of the hydroxyl group of 4-methyl-5-beta-hydroxyethylthiazole (THZ). This is Hydroxyethylthiazole kinase from Pyrococcus furiosus (strain ATCC 43587 / DSM 3638 / JCM 8422 / Vc1).